We begin with the raw amino-acid sequence, 131 residues long: MRQFPSIRGNINEKMMTTMVESQTRSPWRTPVPYLFGGLAAMLGLIAFALLLLACSYWRLSRQTEDEEKQTESGEKVVAKAFEEKILVIMAGQNNPTFLATPVAAKICLDCVNMEKKEGQNGESKVTEENH.

Residues 1 to 34 (MRQFPSIRGNINEKMMTTMVESQTRSPWRTPVPY) lie on the Extracellular side of the membrane. The chain crosses the membrane as a helical span at residues 35-55 (LFGGLAAMLGLIAFALLLLAC). The Cytoplasmic portion of the chain corresponds to 56-131 (SYWRLSRQTE…GESKVTEENH (76 aa)). Positions 88–92 (VIMAG) match the VIMAG motif.

It belongs to the GLUTAMINE DUMPER 1 (TC 9.B.60) family. Expressed in the vascular tissues. Also detected in guard cells.

It is found in the membrane. Its function is as follows. Probable subunit of an amino acid transporter involved in the regulation of the amino acid metabolism. Stimulates amino acid export by activating nonselective amino acid facilitators. The sequence is that of Protein GLUTAMINE DUMPER 5 (GDU5) from Arabidopsis thaliana (Mouse-ear cress).